The following is a 230-amino-acid chain: 5'-methylthioadenosine/S-adenosylhomocysteine nucleosidase (230 aa).

E12 acts as the Proton acceptor in catalysis. Residues G78, I153, and 174 to 175 (ME) contribute to the substrate site. D198 functions as the Proton donor in the catalytic mechanism.

Belongs to the PNP/UDP phosphorylase family. MtnN subfamily.

It carries out the reaction S-adenosyl-L-homocysteine + H2O = S-(5-deoxy-D-ribos-5-yl)-L-homocysteine + adenine. The catalysed reaction is S-methyl-5'-thioadenosine + H2O = 5-(methylsulfanyl)-D-ribose + adenine. It catalyses the reaction 5'-deoxyadenosine + H2O = 5-deoxy-D-ribose + adenine. It functions in the pathway amino-acid biosynthesis; L-methionine biosynthesis via salvage pathway; S-methyl-5-thio-alpha-D-ribose 1-phosphate from S-methyl-5'-thioadenosine (hydrolase route): step 1/2. In terms of biological role, catalyzes the irreversible cleavage of the glycosidic bond in both 5'-methylthioadenosine (MTA) and S-adenosylhomocysteine (SAH/AdoHcy) to adenine and the corresponding thioribose, 5'-methylthioribose and S-ribosylhomocysteine, respectively. Also cleaves 5'-deoxyadenosine, a toxic by-product of radical S-adenosylmethionine (SAM) enzymes, into 5-deoxyribose and adenine. The protein is 5'-methylthioadenosine/S-adenosylhomocysteine nucleosidase of Shewanella sediminis (strain HAW-EB3).